An 87-amino-acid polypeptide reads, in one-letter code: Small ribosomal subunit protein bS20 (87 aa).

The disordered stretch occupies residues 1–20; the sequence is MANSAQARKRARTALKQRAH. Basic residues predominate over residues 7–19; the sequence is ARKRARTALKQRA.

It belongs to the bacterial ribosomal protein bS20 family.

In terms of biological role, binds directly to 16S ribosomal RNA. The sequence is that of Small ribosomal subunit protein bS20 from Chromobacterium violaceum (strain ATCC 12472 / DSM 30191 / JCM 1249 / CCUG 213 / NBRC 12614 / NCIMB 9131 / NCTC 9757 / MK).